A 123-amino-acid polypeptide reads, in one-letter code: MPTINQLIRQGREKKRDKSTAPALKSCPQKRGVCTRVYTTTPKKPNSALRKVARVRLTNGIEVTSYIPGVGHNLQEHSVVLIRGGRVKDLPGVRYHIVRGTLDSVGVKGRMQGRSKYGAKRPK.

Asp89 carries the 3-methylthioaspartic acid modification.

Belongs to the universal ribosomal protein uS12 family. In terms of assembly, part of the 30S ribosomal subunit. Contacts proteins S8 and S17. May interact with IF1 in the 30S initiation complex.

Functionally, with S4 and S5 plays an important role in translational accuracy. Its function is as follows. Interacts with and stabilizes bases of the 16S rRNA that are involved in tRNA selection in the A site and with the mRNA backbone. Located at the interface of the 30S and 50S subunits, it traverses the body of the 30S subunit contacting proteins on the other side and probably holding the rRNA structure together. The combined cluster of proteins S8, S12 and S17 appears to hold together the shoulder and platform of the 30S subunit. This chain is Small ribosomal subunit protein uS12, found in Trichlorobacter lovleyi (strain ATCC BAA-1151 / DSM 17278 / SZ) (Geobacter lovleyi).